The chain runs to 318 residues: HPr kinase/phosphorylase (318 aa).

Residues His-146 and Lys-167 contribute to the active site. 161–168 (GESGLGKS) is a binding site for ATP. Position 168 (Ser-168) interacts with Mg(2+). Asp-185 functions as the Proton acceptor; for phosphorylation activity. Proton donor; for dephosphorylation activity in the catalytic mechanism. The tract at residues 209–218 (LEVRGIGLLD) is important for the catalytic mechanism of both phosphorylation and dephosphorylation. Glu-210 contributes to the Mg(2+) binding site. The active site involves Arg-252. An important for the catalytic mechanism of dephosphorylation region spans residues 273 to 278 (QVVAGR).

Belongs to the HPrK/P family. As to quaternary structure, homohexamer. The cofactor is Mg(2+).

It catalyses the reaction [HPr protein]-L-serine + ATP = [HPr protein]-O-phospho-L-serine + ADP + H(+). The enzyme catalyses [HPr protein]-O-phospho-L-serine + phosphate + H(+) = [HPr protein]-L-serine + diphosphate. Its function is as follows. Catalyzes the ATP- as well as the pyrophosphate-dependent phosphorylation of a specific serine residue in HPr, a phosphocarrier protein of the phosphoenolpyruvate-dependent sugar phosphotransferase system (PTS). HprK/P also catalyzes the pyrophosphate-producing, inorganic phosphate-dependent dephosphorylation (phosphorolysis) of seryl-phosphorylated HPr (P-Ser-HPr). The chain is HPr kinase/phosphorylase from Verminephrobacter eiseniae (strain EF01-2).